The chain runs to 248 residues: Mannose-binding protein C (248 aa).

A signal peptide spans 1 to 20 (MSLFPSLPLLLLSVVAASYS). One can recognise a Collagen-like domain in the interval 42 to 99 (GINGFPGKDGRDGTKGEKGEPGQGLRGLQGPPGKLGPPGNPGPSGSPGPKGQKGDPGK). A disordered region spans residues 43–111 (INGFPGKDGR…DCDSSLAASE (69 aa)). 4-hydroxyproline is present on proline 47. A compositionally biased stretch (basic and acidic residues) spans 49-61 (KDGRDGTKGEKGE). A 4-hydroxyproline mark is found at proline 73, proline 79, proline 82, and proline 88. Pro residues predominate over residues 75–87 (KLGPPGNPGPSGS). The span at 93–102 (QKGDPGKSPD) shows a compositional bias: basic and acidic residues. Positions 112-130 (RKALQTEMARIKKWLTFSL) form a coiled coil. Residues 134 to 245 (VGNKFFLTNG…CSSSHLAVCE (112 aa)) enclose the C-type lectin domain. 2 cysteine pairs are disulfide-bonded: cysteine 155-cysteine 244 and cysteine 222-cysteine 236.

In terms of assembly, oligomeric complex of 3 or more homotrimers. Interacts with MASP1 and MASP2. Interacts with MEP1A and MEP1B and may inhibit their catalytic activity. Post-translationally, hydroxylation on proline residues within the sequence motif, GXPG, is most likely to be 4-hydroxy as this fits the requirement for 4-hydroxylation in vertebrates.

Its subcellular location is the secreted. Calcium-dependent lectin involved in innate immune defense. Binds mannose, fucose and N-acetylglucosamine on different microorganisms and activates the lectin complement pathway. Binds to late apoptotic cells, as well as to apoptotic blebs and to necrotic cells, but not to early apoptotic cells, facilitating their uptake by macrophages. This chain is Mannose-binding protein C (MBL2), found in Pongo pygmaeus (Bornean orangutan).